The following is a 74-amino-acid chain: UPF0435 protein Bcer98_0391 (74 aa).

This sequence belongs to the UPF0435 family.

The protein is UPF0435 protein Bcer98_0391 of Bacillus cytotoxicus (strain DSM 22905 / CIP 110041 / 391-98 / NVH 391-98).